We begin with the raw amino-acid sequence, 214 residues long: ATP phosphoribosyltransferase (214 aa).

The protein belongs to the ATP phosphoribosyltransferase family. Short subfamily. As to quaternary structure, heteromultimer composed of HisG and HisZ subunits.

The protein localises to the cytoplasm. The catalysed reaction is 1-(5-phospho-beta-D-ribosyl)-ATP + diphosphate = 5-phospho-alpha-D-ribose 1-diphosphate + ATP. It functions in the pathway amino-acid biosynthesis; L-histidine biosynthesis; L-histidine from 5-phospho-alpha-D-ribose 1-diphosphate: step 1/9. Its function is as follows. Catalyzes the condensation of ATP and 5-phosphoribose 1-diphosphate to form N'-(5'-phosphoribosyl)-ATP (PR-ATP). Has a crucial role in the pathway because the rate of histidine biosynthesis seems to be controlled primarily by regulation of HisG enzymatic activity. The sequence is that of ATP phosphoribosyltransferase (hisG) from Nostoc sp. (strain PCC 7120 / SAG 25.82 / UTEX 2576).